The primary structure comprises 499 residues: Dual specificity protein kinase CLK2 (499 aa).

Residues 1-67 form a disordered region; the sequence is MPHPRRYHSS…SYDDRSSDRR (67 aa). Over residues 8–21 the composition is skewed to basic and acidic residues; that stretch reads HSSERGSRGSYREH. Positions 22 to 33 are enriched in basic residues; the sequence is YRSRKHKRRRSR. At Ser34 the chain carries Phosphoserine; by PKB/AKT1. Over residues 47 to 67 the composition is skewed to basic and acidic residues; the sequence is REDSYHVRSRSSYDDRSSDRR. The residue at position 98 (Ser98) is a Phosphoserine. Tyr99 carries the phosphotyrosine; by autocatalysis modification. The interval 101-143 is disordered; it reads YQRENSSYRSQRSSRRKHRRRRRRSRTFSRSSSQHSSRRAKSV. The span at 112–127 shows a compositional bias: basic residues; that stretch reads RSSRRKHRRRRRRSRT. Thr127 carries the post-translational modification Phosphothreonine; by PKB/AKT1. Ser142 carries the phosphoserine; by autocatalysis modification. Tyr153 carries the phosphotyrosine modification. The 317-residue stretch at 163 to 479 folds into the Protein kinase domain; it reads YEIVSTLGEG…LGEALQHPFF (317 aa). ATP is bound by residues 169–177 and Lys193; that span reads LGEGTFGRV. Asp290 serves as the catalytic Proton acceptor. Phosphothreonine; by PKB/AKT2 is present on Thr344.

It belongs to the protein kinase superfamily. CMGC Ser/Thr protein kinase family. Lammer subfamily. Interacts with RBMX. Interacts with AKT1 and UBL5. In terms of processing, autophosphorylates on all three types of residues. Phosphorylation on Ser-34 and Thr-127 by AKT1 is induced by ionizing radiation or insulin. Phosphorylation plays a critical role in cell proliferation following low dose radiation and prevents cell death following high dose radiation. Phosphorylation at Thr-344 by PKB/AKT2 induces its kinase activity which is required for its stability. The phosphorylation status at Ser-142 influences its subnuclear localization; inhibition of phosphorylation at Ser-142 results in accumulation in the nuclear speckle. As to expression, endothelial cells. Expressed in androgen-dependent prostate cancer cells.

The protein localises to the nucleus. The protein resides in the nucleus speckle. The catalysed reaction is L-seryl-[protein] + ATP = O-phospho-L-seryl-[protein] + ADP + H(+). It carries out the reaction L-threonyl-[protein] + ATP = O-phospho-L-threonyl-[protein] + ADP + H(+). The enzyme catalyses L-tyrosyl-[protein] + ATP = O-phospho-L-tyrosyl-[protein] + ADP + H(+). Its activity is regulated as follows. 5,6-dichloro-1-b-D-ribofuranosylbenzimidazole (DRB) inhibits autophosphorylation. TG003 inhibits its kinase activity and affects the regulation of alternative splicing mediated by phosphorylation of SR proteins. Its function is as follows. Dual specificity kinase acting on both serine/threonine and tyrosine-containing substrates. Phosphorylates serine- and arginine-rich (SR) proteins of the spliceosomal complex. May be a constituent of a network of regulatory mechanisms that enable SR proteins to control RNA splicing and can cause redistribution of SR proteins from speckles to a diffuse nucleoplasmic distribution. Acts as a suppressor of hepatic gluconeogenesis and glucose output by repressing PPARGC1A transcriptional activity on gluconeogenic genes via its phosphorylation. Phosphorylates PPP2R5B thereby stimulating the assembly of PP2A phosphatase with the PPP2R5B-AKT1 complex leading to dephosphorylation of AKT1. Phosphorylates: PTPN1, SRSF1 and SRSF3. Regulates the alternative splicing of tissue factor (F3) pre-mRNA in endothelial cells. Phosphorylates PAGE4 at several serine and threonine residues and this phosphorylation attenuates the ability of PAGE4 to potentiate the transcriptional activator activity of JUN. This Homo sapiens (Human) protein is Dual specificity protein kinase CLK2 (CLK2).